Consider the following 720-residue polypeptide: B3 domain-containing transcription factor ABI3 (720 aa).

Disordered stretches follow at residues 122–146 (RSDG…SSGA) and 324–360 (FQQD…PPQQ). Residues 129–146 (TPNQNQYASGNCDDSSGA) show a composition bias toward polar residues. Residues 324-344 (FQQDPFQNPNPNNNNLIPPSD) are compositionally biased toward low complexity. Residues 572 to 674 (LQKVLKQSDV…KYLIRGVKVR (103 aa)) constitute a DNA-binding region (TF-B3). A disordered region spans residues 675-720 (QPSGQKPEAPPSSAATKRQNKSQRNINNNSPSANVVVASPTSQTVK). The span at 687-700 (SAATKRQNKSQRNI) shows a compositional bias: polar residues. Positions 701–714 (NNNSPSANVVVASP) are enriched in low complexity.

In terms of assembly, interacts (via C-terminus) with SPK1, SCAR3, ABI5, APRR1, AIP2, AIP3 and AIP4. Binds to BZIP10 and BZIP25 and forms complexes made of ABI3, BZIP53 and BZIP25 or BZIP10. In terms of processing, ubiquitinated by AIP2. Ubiquitination probably leads to its subsequent degradation, thus negatively regulating ABA signaling. As to expression, isoform 2 accumulates only at the end of seed maturation.

The protein localises to the nucleus. The protein resides in the cytoplasm. Its function is as follows. Participates in abscisic acid-regulated gene expression during seed development. Regulates the transcription of SGR1 and SGR2 that are involved in leaf and embryo degreening. In Arabidopsis thaliana (Mouse-ear cress), this protein is B3 domain-containing transcription factor ABI3 (ABI3).